The primary structure comprises 124 residues: Astakine (124 aa).

Residues 1-21 (MAVSSAVRMLSVACLVVSAAG) form the signal peptide. 5 disulfides stabilise this stretch: cysteine 28–cysteine 40, cysteine 34–cysteine 52, cysteine 39–cysteine 91, cysteine 62–cysteine 99, and cysteine 93–cysteine 106.

Belongs to the AVIT (prokineticin) family.

Its subcellular location is the secreted. In terms of biological role, cytokine directly involved in hematopoiesis. This chain is Astakine, found in Penaeus monodon (Giant tiger prawn).